We begin with the raw amino-acid sequence, 491 residues long: MANLTGNVYIDGLWLPGHGAPFESVQPVTGETVWDGNAASLEDVDAAVREARKAFLAWRRKSLAERQAVIEAFGELLEANKEELAHQIGLETGKPLWESRTEVAAMMGKIPISVKAYNERTGHTESDVAGGHAVLRHRPHGVVAVFGPYNFPGHLPNGHIVPALLAGNTVVFKPSELTPGVAELTVRLWEKAGLPDGVINLVQGGSDTGKCLARHSLIDGLFFTGSSTVGHLLHEQFGGQPEKILALEMGGNNPLIVQNVSDLDGAVHHALQSAFLSAGQRCTCARRLLVPKGKKGDEFLARLVEVAARITVAEFDADPQPFMGSVISAEAANQLLKAQAAMLEKGATSLLEMKQLKPDTGLLSPGIVDATGIELEDQEFFGPLLTVYRYKGFDEALELANNTRYGLSAGILSDDRKLYNRLVEEVRAGIVNWNRPLTGASSAAPFGGVGASGNHRPSAYYAADYCAWPMASLEAGKSELPDSLAPGLNFD.

225 to 230 (GSSTVG) provides a ligand contact to NAD(+). Residues glutamate 248 and cysteine 282 contribute to the active site.

This sequence belongs to the aldehyde dehydrogenase family. AstD subfamily.

The enzyme catalyses N-succinyl-L-glutamate 5-semialdehyde + NAD(+) + H2O = N-succinyl-L-glutamate + NADH + 2 H(+). It functions in the pathway amino-acid degradation; L-arginine degradation via AST pathway; L-glutamate and succinate from L-arginine: step 4/5. Catalyzes the NAD-dependent reduction of succinylglutamate semialdehyde into succinylglutamate. The chain is N-succinylglutamate 5-semialdehyde dehydrogenase from Marinobacter nauticus (strain ATCC 700491 / DSM 11845 / VT8) (Marinobacter aquaeolei).